Here is a 220-residue protein sequence, read N- to C-terminus: Adenylate kinase (220 aa).

An ATP-binding site is contributed by 12 to 17; it reads GAGKGT. The NMP stretch occupies residues 32-62; the sequence is STGDIFRDIVKKENDELGKKIKEIMEKGELV. AMP contacts are provided by residues T33, R38, 60–62, 88–91, and Q95; these read ELV and GYPR. The tract at residues 129–166 is LID; that stretch reads SRRICPKCGRIYNMISLPPKEDELCDDCKVKLVQRDDD. Position 130 (R130) interacts with ATP. Residues C133 and C136 each contribute to the Zn(2+) site. 139-140 is a binding site for ATP; that stretch reads IY. C153 and C156 together coordinate Zn(2+). AMP-binding residues include R163 and R174. ATP is bound at residue I202.

It belongs to the adenylate kinase family. In terms of assembly, monomer.

It localises to the cytoplasm. It catalyses the reaction AMP + ATP = 2 ADP. It participates in purine metabolism; AMP biosynthesis via salvage pathway; AMP from ADP: step 1/1. Functionally, catalyzes the reversible transfer of the terminal phosphate group between ATP and AMP. Plays an important role in cellular energy homeostasis and in adenine nucleotide metabolism. This is Adenylate kinase from Thermotoga neapolitana.